The following is a 197-amino-acid chain: uncharacterized protein (197 aa).

A signal peptide spans 1-23 (MSARAPKELRLALPPCLLNRTFA). The Extracellular portion of the chain corresponds to 24-61 (SPNASGSGNTGARGPGAVGSGTCITQVGQQLFQSFSST). N-linked (GlcNAc...) asparagine glycosylation is present at Asn-26. The chain crosses the membrane as a helical span at residues 62-82 (LVLIVLVTLIFCLIVLSLSTF). The Cytoplasmic portion of the chain corresponds to 83–197 (HIHKRRMKKR…EGLLQTVVLS (115 aa)). Residues 94 to 180 (MQRAQEEYER…SSPQGAHAAS (87 aa)) form a disordered region. Composition is skewed to basic and acidic residues over residues 96–107 (RAQEEYERDHCS) and 125–136 (HAKETRLERQPR). The span at 141-161 (CAPSNASSLSSSSPGLPCQGP) shows a compositional bias: low complexity. Over residues 162 to 171 (CAPPPPPPAS) the composition is skewed to pro residues.

Its subcellular location is the membrane. This is an uncharacterized protein from Homo sapiens (Human).